The following is a 405-amino-acid chain: Tyrosine--tRNA ligase (405 aa).

The 'HIGH' region motif lies at 41–50; the sequence is PTAPDLHLGH. The 'KMSKS' region motif lies at 225–229; it reads KMSKS. Residue lysine 228 participates in ATP binding. In terms of domain architecture, S4 RNA-binding spans 342-404; it reads EPLLVWVLSK…GKKGKFLKII (63 aa).

The protein belongs to the class-I aminoacyl-tRNA synthetase family. TyrS type 2 subfamily. Homodimer.

The protein resides in the cytoplasm. The catalysed reaction is tRNA(Tyr) + L-tyrosine + ATP = L-tyrosyl-tRNA(Tyr) + AMP + diphosphate + H(+). In terms of biological role, catalyzes the attachment of tyrosine to tRNA(Tyr) in a two-step reaction: tyrosine is first activated by ATP to form Tyr-AMP and then transferred to the acceptor end of tRNA(Tyr). The polypeptide is Tyrosine--tRNA ligase (Leptospira interrogans serogroup Icterohaemorrhagiae serovar Lai (strain 56601)).